The primary structure comprises 313 residues: Jacalin-related lectin 8 (313 aa).

Positions 1–23 (MFIIYLFIFLSSAIIDSNGVAMA) are cleaved as a signal peptide. 2 Jacalin-type lectin domains span residues 24–163 (QKIE…YVKT) and 165–309 (PTKS…YFSP).

It belongs to the jacalin lectin family.

In Arabidopsis thaliana (Mouse-ear cress), this protein is Jacalin-related lectin 8 (JAL8).